The chain runs to 337 residues: F420-dependent glucose-6-phosphate dehydrogenase (337 aa).

Aspartate 40 provides a ligand contact to coenzyme F420-(gamma-Glu)n. Histidine 41 (proton donor) is an active-site residue. Coenzyme F420-(gamma-Glu)n is bound by residues threonine 77 and 108–109 (SG). Glutamate 110 functions as the Proton acceptor in the catalytic mechanism. Coenzyme F420-(gamma-Glu)n-binding positions include asparagine 113, 178 to 179 (GG), and 181 to 182 (VV). The substrate site is built by threonine 196, lysine 199, lysine 260, and arginine 284.

This sequence belongs to the F420-dependent glucose-6-phosphate dehydrogenase family. As to quaternary structure, homodimer.

It catalyses the reaction oxidized coenzyme F420-(gamma-L-Glu)(n) + D-glucose 6-phosphate + H(+) = 6-phospho-D-glucono-1,5-lactone + reduced coenzyme F420-(gamma-L-Glu)(n). Functionally, catalyzes the coenzyme F420-dependent oxidation of glucose 6-phosphate (G6P) to 6-phosphogluconolactone. The polypeptide is F420-dependent glucose-6-phosphate dehydrogenase (Rhodococcus erythropolis (strain PR4 / NBRC 100887)).